A 545-amino-acid chain; its full sequence is CTP synthase (545 aa).

Positions methionine 1–phenylalanine 266 are amidoligase domain. Serine 13 is a binding site for CTP. Serine 13 serves as a coordination point for UTP. Residues serine 14–isoleucine 19 and aspartate 71 contribute to the ATP site. Mg(2+)-binding residues include aspartate 71 and glutamate 140. Residues aspartate 147–glutamate 149, lysine 187–glutamine 192, and lysine 223 contribute to the CTP site. Residues lysine 187–glutamine 192 and lysine 223 each bind UTP. Lysine 239–alanine 241 serves as a coordination point for ATP. The Glutamine amidotransferase type-1 domain maps to arginine 292–lysine 543. Residue glycine 353 coordinates L-glutamine. The active-site Nucleophile; for glutamine hydrolysis is the cysteine 380. L-glutamine contacts are provided by residues leucine 381–glutamine 384, glutamate 404, and arginine 471. Residues histidine 516 and glutamate 518 contribute to the active site.

It belongs to the CTP synthase family. As to quaternary structure, homotetramer.

It catalyses the reaction UTP + L-glutamine + ATP + H2O = CTP + L-glutamate + ADP + phosphate + 2 H(+). It carries out the reaction L-glutamine + H2O = L-glutamate + NH4(+). The catalysed reaction is UTP + NH4(+) + ATP = CTP + ADP + phosphate + 2 H(+). Its pathway is pyrimidine metabolism; CTP biosynthesis via de novo pathway; CTP from UDP: step 2/2. With respect to regulation, allosterically activated by GTP, when glutamine is the substrate; GTP has no effect on the reaction when ammonia is the substrate. The allosteric effector GTP functions by stabilizing the protein conformation that binds the tetrahedral intermediate(s) formed during glutamine hydrolysis. Inhibited by the product CTP, via allosteric rather than competitive inhibition. Functionally, catalyzes the ATP-dependent amination of UTP to CTP with either L-glutamine or ammonia as the source of nitrogen. Regulates intracellular CTP levels through interactions with the four ribonucleotide triphosphates. The polypeptide is CTP synthase (Acinetobacter baumannii (strain ACICU)).